The chain runs to 267 residues: Myxobacterial hemagglutinin (267 aa).

Repeat copies occupy residues Met1–Ser66, Ser67–Thr133, Asp134–Thr200, and Ser201–Gly267. A 4 X 65 AA tandem repeats region spans residues Met1–Gly267.

It belongs to the bacterial lectin family.

This lectin might have a role in the differentiation of cells. This is Myxobacterial hemagglutinin (mbhA) from Myxococcus xanthus.